An 849-amino-acid polypeptide reads, in one-letter code: Villin-1 (849 aa).

5 Gelsolin-like repeats span residues 30-107 (IEKS…DKFL), 147-213 (RVTE…EDGK), 262-335 (VPVE…TVEF), 405-475 (QEQL…PEMF), and 527-566 (AIQV…DHNL). The interval 739–849 (ETPERSLRKS…AVATGTPRRL (111 aa)) is disordered. 2 stretches are compositionally biased toward low complexity: residues 747-782 (KSSS…SAST) and 791-823 (PAAL…STPS).

It belongs to the villin/gelsolin family.

The protein localises to the cytoplasm. The protein resides in the cytoskeleton. Functionally, ca(2+)-independent actin-binding protein. Binds actin microfilaments (MFs). Involved in actin filament bundling, severing and capping. Caps the barbed end of actin filaments and protects them from disassembly. Promotes VLN3-mediated MF severing. The protein is Villin-1 of Oryza sativa subsp. indica (Rice).